The chain runs to 234 residues: uncharacterized protein (234 aa).

Residues 13-32 (KSINYYIFFFQYTLVYNTIQ) form a helical membrane-spanning segment. 2 disordered regions span residues 102 to 130 (HSKT…SSNS) and 159 to 185 (ESDS…SEYE). Low complexity predominate over residues 103–130 (SKTTSLPFSSSSPQSSSSSSSSSSSSNS). Positions 167 to 185 (EFDSESNSDFDSESESEYE) are enriched in acidic residues.

Its subcellular location is the membrane. This is an uncharacterized protein from Dictyostelium discoideum (Social amoeba).